We begin with the raw amino-acid sequence, 102 residues long: Small ribosomal subunit protein uS10 (102 aa).

The protein belongs to the universal ribosomal protein uS10 family. Part of the 30S ribosomal subunit.

Functionally, involved in the binding of tRNA to the ribosomes. The protein is Small ribosomal subunit protein uS10 of Staphylococcus aureus (strain JH9).